The primary structure comprises 334 residues: Fructose-1,6-bisphosphatase class 1 (334 aa).

Glutamate 93, aspartate 117, leucine 119, and aspartate 120 together coordinate Mg(2+). Residues 120–123 (DGSS), asparagine 213, tyrosine 244, and lysine 274 each bind substrate. Position 280 (glutamate 280) interacts with Mg(2+).

This sequence belongs to the FBPase class 1 family. In terms of assembly, homotetramer. Mg(2+) serves as cofactor.

The protein localises to the cytoplasm. The enzyme catalyses beta-D-fructose 1,6-bisphosphate + H2O = beta-D-fructose 6-phosphate + phosphate. The protein operates within carbohydrate biosynthesis; gluconeogenesis. This chain is Fructose-1,6-bisphosphatase class 1, found in Flavobacterium johnsoniae (strain ATCC 17061 / DSM 2064 / JCM 8514 / BCRC 14874 / CCUG 350202 / NBRC 14942 / NCIMB 11054 / UW101) (Cytophaga johnsonae).